We begin with the raw amino-acid sequence, 1404 residues long: DNA-directed RNA polymerase subunit beta' (1404 aa).

4 residues coordinate Zn(2+): Cys-70, Cys-72, Cys-85, and Cys-88. Positions 460, 462, and 464 each coordinate Mg(2+). 4 residues coordinate Zn(2+): Cys-814, Cys-888, Cys-895, and Cys-898.

This sequence belongs to the RNA polymerase beta' chain family. In terms of assembly, the RNAP catalytic core consists of 2 alpha, 1 beta, 1 beta' and 1 omega subunit. When a sigma factor is associated with the core the holoenzyme is formed, which can initiate transcription. Mg(2+) serves as cofactor. Zn(2+) is required as a cofactor.

The catalysed reaction is RNA(n) + a ribonucleoside 5'-triphosphate = RNA(n+1) + diphosphate. Its function is as follows. DNA-dependent RNA polymerase catalyzes the transcription of DNA into RNA using the four ribonucleoside triphosphates as substrates. The sequence is that of DNA-directed RNA polymerase subunit beta' from Shewanella loihica (strain ATCC BAA-1088 / PV-4).